The following is a 409-amino-acid chain: Divalent metal cation transporter MntH (409 aa).

Helical transmembrane passes span 19-39, 46-66, 98-118, 122-142, 155-175, 196-216, 241-261, 290-310, 320-340, 348-368, and 388-408; these read LSLM…GNFA, ASFG…AMLI, WVQA…GAAI, LLLG…TFLI, LVIG…LVFS, AVFL…IYLH, IAMT…AAAF, IFGL…TLAG, FYIP…IVIL, ILVM…VPLL, and ILGK…LVSL.

This sequence belongs to the NRAMP family.

The protein localises to the cell inner membrane. In terms of biological role, h(+)-stimulated, divalent metal cation uptake system. In Yersinia enterocolitica serotype O:8 / biotype 1B (strain NCTC 13174 / 8081), this protein is Divalent metal cation transporter MntH.